Here is a 184-residue protein sequence, read N- to C-terminus: Adenylate kinase 2 (184 aa).

An ATP-binding site is contributed by 10–15; that stretch reads GSGKST. Residues 30 to 59 form an NMP region; sequence STGEILREAISHLSELGRHAQPYMIKGELV. AMP is bound by residues threonine 31, arginine 36, 57–59, 85–88, and glutamine 92; these read ELV and GYPR. The LID stretch occupies residues 126–132; sequence GRSLPDD. Position 127 (arginine 127) interacts with ATP. Arginine 140 serves as a coordination point for AMP. ATP is bound at residue glutamine 168.

Belongs to the adenylate kinase family. Monomer.

It is found in the cytoplasm. The catalysed reaction is AMP + ATP = 2 ADP. Its pathway is purine metabolism; AMP biosynthesis via salvage pathway; AMP from ADP: step 1/1. Functionally, catalyzes the reversible transfer of the terminal phosphate group between ATP and AMP. Plays an important role in cellular energy homeostasis and in adenine nucleotide metabolism. This is Adenylate kinase 2 from Nostoc sp. (strain PCC 7120 / SAG 25.82 / UTEX 2576).